The following is an 81-amino-acid chain: Antitoxin MT2731 (81 aa).

Functionally, antitoxin component of a type II toxin-antitoxin (TA) system. Neutralizes the effect of cognate toxin MT2730. The polypeptide is Antitoxin MT2731 (Mycobacterium tuberculosis (strain CDC 1551 / Oshkosh)).